We begin with the raw amino-acid sequence, 101 residues long: Large ribosomal subunit protein bL21 (101 aa).

Belongs to the bacterial ribosomal protein bL21 family. As to quaternary structure, part of the 50S ribosomal subunit. Contacts protein L20.

In terms of biological role, this protein binds to 23S rRNA in the presence of protein L20. This chain is Large ribosomal subunit protein bL21, found in Sulfurovum sp. (strain NBC37-1).